The sequence spans 1100 residues: MSVEAYGPSSQTLTFLDTEEAELLGADTQGSEFEFTDFTLPSQTQTQGQTQSQLDNQVNGPDGVLPNGEDAVGKTSQLLAELNFEEDEEDTYYTKDLPVHACSYCGIHDPACVVYCNTSKKWFCNGRGNTSGSHIVNHLVRAKCKEVTLHKDGPLGETVLECYNCGCRNVFLLGFIPAKADSVVVLLCRQPCASQSSLKDINWDSSQWQPLIQDRCFLSWLVKIPSEQEQLRARQITAQQINKLEELWKENPTATLEDLEKPGVDEEPQHVLLRYEDAYQYQNIFGPLVKLEADYDKKLKESQTQDNITVRWDLGLNKKRIAYFTLPKTDSGDMRLMQGDEICLRYKGDMAPLWKGIGHVIKVPDNYGDEIAIELRSSAGAPVEVPHNFQVDFVWKSTSFDRMQSALKTFAVDETSVSGYIYHKLLGHEVEDVIIKCQLPKRFTAQGLPDLNHSQVYAVKTVLQRPLSLIQGPPGTGKTVTSATIVYHLARQGNGPVLVCAPSNIAVDQLTEKIHQTGLKVVRLCAKSREAIDSPVSFLALHNQIRNMDSMPELQKLQQLKDETGELSSSDEKRYRALKRTAERELLMNADVICCTCVGAGDPRLAKMQFRSILIDESTQATEPECMVPVVLGAKQLILVGDHCQLGPVVMCKKAAKAGLSQSLFERLVVLGIRPIRLQVQYRMHPALSAFPSNIFYEGSLQNGVTAADRLKKGFDFQWPQPDKPMFFYVTQGQEEIASSGTSYLNRTEAANVEKITTRLLKAGAKPDQIGIITPYEGQRSYLVQYMQFSGSLHTKLYQEVEIASVDAFQGREKDFIILSCVRANEHQGIGFLNDPRRLNVALTRARYGVIIVGNPKALSKQPLWNHLLNYYKEQKVLVEGPLNNLRESLMQFSKPRKLVNTINPGARFMSTAMYDAREAMIPGSVYDRSSTGRPSNMYFQTHDQVGMIGTGPNPMGSLNIPIPFNLVMPPMPPPGYLGQVNGPAAGRGAPKGKTGGRGGRQRNRGTGNHGSGQPNMPNSQASQDLVSQPFSQGPLTQGYITMSQPSQMSQPGLSQPELSQDSYLGDEFKSQMDVALSQDSTYQGERAYQHGGVTGLSQY.

Positions 42-53 (SQTQTQGQTQSQ) are enriched in low complexity. Residues 42–67 (SQTQTQGQTQSQLDNQVNGPDGVLPN) form a disordered region. One can recognise a Upf1 CH-rich domain in the interval 94–251 (TKDLPVHACS…NKLEELWKEN (158 aa)). Residues Cys-102, Cys-105, Cys-116, Ser-119, Cys-124, His-134, His-138, Cys-144, Cys-162, Cys-165, Cys-188, and Cys-192 each coordinate Zn(2+). A C3H region spans residues 102 to 134 (CSYCGIHDPACVVYCNTSKKWFCNGRGNTSGSH). The tract at residues 116–144 (CNTSKKWFCNGRGNTSGSHIVNHLVRAKC) is CC/SHH/C. The segment at 162-192 (CYNCGCRNVFLLGFIPAKADSVVVLLCRQPC) is C4. ATP contacts are provided by residues Gln-455, 475-479 (GTGKT), Gln-645, Tyr-682, and Glu-813. A disordered region spans residues 978–1065 (LGQVNGPAAG…QPELSQDSYL (88 aa)). The segment covering 982 to 993 (NGPAAGRGAPKG) has biased composition (low complexity). The span at 1012-1063 (SGQPNMPNSQASQDLVSQPFSQGPLTQGYITMSQPSQMSQPGLSQPELSQDS) shows a compositional bias: polar residues.

The protein belongs to the DNA2/NAM7 helicase family.

It localises to the cytoplasm. Its subcellular location is the P-body. It is found in the nucleus. The protein localises to the perinuclear region. In terms of biological role, RNA-dependent helicase and ATPase required for nonsense-mediated decay (NMD) of mRNAs containing premature stop codons. Is recruited to mRNAs upon translation termination and undergoes a cycle of phosphorylation and dephosphorylation; its phosphorylation appears to be a key step in NMD. The formation of an upf1-upf2-upf3 surveillance complex is believed to activate NMD. The protein is Regulator of nonsense transcripts 1 of Danio rerio (Zebrafish).